The following is a 337-amino-acid chain: Oxidoreductase andH (337 aa).

Belongs to the NmrA-type oxidoreductase family.

The protein operates within secondary metabolite biosynthesis; terpenoid biosynthesis. Its function is as follows. Oxidoreductase; part of the gene cluster that mediates the biosynthesis of anditomin, a fungal meroterpenoid. The first step of the pathway is the synthesis of 3,5-dimethylorsellinic acid (DMOA) by the polyketide synthase andM. DMOA is then converted to the phthalide compound 5,7-dihydroxy-4,6-dimethylphthalide (DHDMP) by the cytochrome P450 monooxygenase andK, which is further prenylated by the prenyltransferase andD to yield farnesyl-DHDMP. Further epoxidation by the FAD-dependent monooxygenase andE leads to epoxyfarnesyl-DHDMP. The next step involves the terpene cyclase andB that converts epoxyfarnesyl-DHDMP into preandiloid A through opening of the epoxide ring followed by the cyclization of the farnesyl moiety. Preandiloid A is in turn oxidized at the C-3 hydroxyl group to yield preandiloid B by the dehydrogenase andC. The dioxygenase andA is solely responsible for the dehydrogenation of preandiloid B leading to the enone preandiloid C, as well as for the intriguing structural rearrangement to generate the bicyclo[2.2.2]octane core, transforming preandiloid C into andiconin. FAD-binding monooxygenase andJ then produces andilesin D which is reduced by dehydrogenase andI to yield andilesin A. Action of acetyltransferase andG followed by a spontaneous acetate elimination leads then to andilesin B, which is in turn substrate of the short chain dehydrogenase andH to yield andilesin C. Finally, the dioxygenase andF catalyzes the transformation of andilesin C to anditomin. In Emericella variicolor (Aspergillus stellatus), this protein is Oxidoreductase andH.